A 142-amino-acid polypeptide reads, in one-letter code: Large ribosomal subunit protein uL13 (142 aa).

It belongs to the universal ribosomal protein uL13 family. In terms of assembly, part of the 50S ribosomal subunit.

In terms of biological role, this protein is one of the early assembly proteins of the 50S ribosomal subunit, although it is not seen to bind rRNA by itself. It is important during the early stages of 50S assembly. In Salmonella agona (strain SL483), this protein is Large ribosomal subunit protein uL13.